The chain runs to 441 residues: 4-alpha-glucanotransferase (441 aa).

Residues D13, N15, D17, V19, and D21 each contribute to the Ca(2+) site. Residue D186 is the Nucleophile of the active site. Residue E216 is the Proton donor of the active site.

Belongs to the glycosyl hydrolase 13 family. Monomer. It depends on Ca(2+) as a cofactor.

It localises to the cytoplasm. The enzyme catalyses Transfers a segment of a (1-&gt;4)-alpha-D-glucan to a new position in an acceptor, which may be glucose or a (1-&gt;4)-alpha-D-glucan.. The protein is 4-alpha-glucanotransferase (mgtA) of Thermotoga maritima (strain ATCC 43589 / DSM 3109 / JCM 10099 / NBRC 100826 / MSB8).